We begin with the raw amino-acid sequence, 173 residues long: Alpha-crystallin A chain (173 aa).

Position 1 is an N-acetylmethionine (Met1). The required for complex formation with BFSP1 and BFSP2 stretch occupies residues 1–63 (MDIAIQHPWF…RSVLDSGISE (63 aa)). Gln6 is modified (deamidated glutamine; partial). Ser45 is subject to Phosphoserine. The residue at position 50 (Gln50) is a Deamidated glutamine; partial. Positions 52 to 162 (LFRSVLDSGI…GHSERAIPVS (111 aa)) constitute a sHSP domain. Position 70 is an N6-acetyllysine (Lys70). Gln90 is subject to Deamidated glutamine; partial. Residue Lys99 is modified to N6-acetyllysine. Zn(2+) is bound at residue His100. Asn101 is modified (deamidated asparagine; partial). Glu102 and His107 together coordinate Zn(2+). At Ser122 the chain carries Phosphoserine. Deamidated asparagine; partial is present on Asn123. Residues 144-173 (PKVTSGMDAGHSERAIPVSREEKPSSAPSS) form a disordered region. Residues 153–167 (GHSERAIPVSREEKP) are compositionally biased toward basic and acidic residues. His154 is a Zn(2+) binding site. O-linked (GlcNAc) serine glycosylation is present at Ser162.

This sequence belongs to the small heat shock protein (HSP20) family. Heteromer composed of three CRYAA and one CRYAB subunits. Inter-subunit bridging via zinc ions enhances stability, which is crucial as there is no protein turn over in the lens. Can also form homodimers and homotetramers (dimers of dimers) which serve as the building blocks of homooligomers. Within homooligomers, the zinc-binding motif is created from residues of 3 different molecules. His-100 and Glu-102 from one molecule are ligands of the zinc ion, and His-107 and His-154 residues from additional molecules complete the site with tetrahedral coordination geometry. Part of a complex required for lens intermediate filament formation composed of BFSP1, BFSP2 and CRYAA. Acetylation at Lys-70 may increase chaperone activity. Post-translationally, undergoes age-dependent proteolytical cleavage at the C-terminus.

Its subcellular location is the cytoplasm. The protein resides in the nucleus. Its function is as follows. Contributes to the transparency and refractive index of the lens. Acts as a chaperone, preventing aggregation of various proteins under a wide range of stress conditions. Required for the correct formation of lens intermediate filaments as part of a complex composed of BFSP1, BFSP2 and CRYAA. The sequence is that of Alpha-crystallin A chain (CRYAA) from Phocoena phocoena (Harbor porpoise).